Here is a 131-residue protein sequence, read N- to C-terminus: Torsin-1A-interacting protein 2, isoform IFRG15 (131 aa).

This chain is Torsin-1A-interacting protein 2, isoform IFRG15 (TOR1AIP2), found in Homo sapiens (Human).